The chain runs to 233 residues: MKRIALFFCFIFSFAAHANNIIVNGTRFIYPGNEKEITVQLSNTADRPALATAWLDNGNADATPDTITTPFIITPPISRVDAKSGQTLRIKLGSNAGLAKDKETLWWLNLLEIPPVEASQKNEGQNILQLAIRSRFKFIYRPAGLGNRDAAAEKLALSANGSSLSVSNPTPFYITVSRISRNGGKALNSKTVMFAPQSSQTIALSSAVSKGETLTVNNINDYGADVAVKVTVK.

The N-terminal stretch at 1–18 (MKRIALFFCFIFSFAAHA) is a signal peptide.

Belongs to the periplasmic pilus chaperone family.

It localises to the periplasm. In terms of biological role, mediates assembly of pili by forming soluble multimeric complexes with pili subunits as an intermediate step in the assembly process. This protein is involved in type 3 pili assembly. In Klebsiella pneumoniae, this protein is Chaperone protein MrkB (mrkB).